The following is a 284-amino-acid chain: Protein G1-like9 (284 aa).

Positions 1–69 (MEPSPDAPRA…PAAAGLSRYE (69 aa)) are disordered. 2 stretches are compositionally biased toward low complexity: residues 13–32 (AEEQPGPSSSASAPAPAASS) and 40–63 (QSQAQQQVQEAQPQPLAQQAPAAA). The region spanning 67-194 (RYESQKRRDW…ARGIPYEKKR (128 aa)) is the ALOG domain. Residues 192-196 (KKRKR) carry the Nuclear localization signal motif. Residues 209–284 (VAPPPVVTAP…SAAKGSATSS (76 aa)) are disordered. Low complexity predominate over residues 246–284 (TTPAASPTTPPATSVGTTTAAATAAAAKGSAAKGSATSS).

Belongs to the plant homeotic and developmental regulators ALOG protein family.

The protein resides in the nucleus. Functionally, probable transcription regulator that acts as a developmental regulator by promoting cell growth in response to light. This chain is Protein G1-like9, found in Oryza sativa subsp. indica (Rice).